Here is a 688-residue protein sequence, read N- to C-terminus: Elongation factor G (688 aa).

In terms of domain architecture, tr-type G spans 8–282 (EKTRNIGIIA…AIVDYLPAPC (275 aa)). GTP is bound by residues 17-24 (AHIDAGKT), 81-85 (DTPGH), and 135-138 (NKMD).

The protein belongs to the TRAFAC class translation factor GTPase superfamily. Classic translation factor GTPase family. EF-G/EF-2 subfamily.

It is found in the cytoplasm. Its function is as follows. Catalyzes the GTP-dependent ribosomal translocation step during translation elongation. During this step, the ribosome changes from the pre-translocational (PRE) to the post-translocational (POST) state as the newly formed A-site-bound peptidyl-tRNA and P-site-bound deacylated tRNA move to the P and E sites, respectively. Catalyzes the coordinated movement of the two tRNA molecules, the mRNA and conformational changes in the ribosome. The sequence is that of Elongation factor G from Onion yellows phytoplasma (strain OY-M).